Reading from the N-terminus, the 131-residue chain is MSWKAYVDDHLCCEIDGQNLTSAAILGHDGSVWAQSPNFPQFKPEENAGIVKDFEEPGHLAPTGLFLGGTKYMVIQGEPGVVIRGKKGTGGITIKKTGMALILGIYDEPMTPGQCNLVVERLGDYLIDQGY.

It belongs to the profilin family. Occurs in many kinds of cells as a complex with monomeric actin in a 1:1 ratio.

It is found in the cytoplasm. Its subcellular location is the cytoskeleton. Functionally, binds to actin and affects the structure of the cytoskeleton. At high concentrations, profilin prevents the polymerization of actin, whereas it enhances it at low concentrations. By binding to PIP2, it inhibits the formation of IP3 and DG. The polypeptide is Profilin-3 (PRO3) (Triticum aestivum (Wheat)).